Here is a 466-residue protein sequence, read N- to C-terminus: Benzoate transport protein (466 aa).

Topologically, residues Met-1 to Arg-22 are cytoplasmic. A helical membrane pass occupies residues Val-23–Val-43. The Periplasmic portion of the chain corresponds to Ala-44–Gly-60. Residues Phe-61–Ala-81 traverse the membrane as a helical segment. At Asp-82–Lys-93 the chain is on the cytoplasmic side. The helical transmembrane segment at Val-94–Thr-114 threads the bilayer. At Thr-115 to Ser-119 the chain is on the periplasmic side. Residues Ile-120–Val-140 traverse the membrane as a helical segment. The Cytoplasmic portion of the chain corresponds to Ser-141–Ser-150. A helical transmembrane segment spans residues Phe-151–Gly-171. Residues Ser-172–Lys-181 are Periplasmic-facing. The chain crosses the membrane as a helical span at residues Ile-182–Pro-202. At Glu-203–Arg-258 the chain is on the cytoplasmic side. A helical transmembrane segment spans residues Ala-259 to Leu-279. Residues Gly-280 to Ser-297 are Periplasmic-facing. A helical transmembrane segment spans residues Leu-298–Leu-318. At Ala-319–Lys-325 the chain is on the cytoplasmic side. The helical transmembrane segment at Phe-326–Phe-346 threads the bilayer. The Periplasmic portion of the chain corresponds to Ser-347–Ser-348. A helical transmembrane segment spans residues Val-349 to Leu-369. Topologically, residues Leu-370–Gly-387 are cytoplasmic. The chain crosses the membrane as a helical span at residues Trp-388–Leu-408. Residues Ser-409–His-414 lie on the Periplasmic side of the membrane. A helical transmembrane segment spans residues Phe-415 to Ile-435. Residues Asn-436–His-466 lie on the Cytoplasmic side of the membrane.

Belongs to the major facilitator superfamily. Aromatic acid:H(+) symporter (AAHS) (TC 2.A.1.15) family.

Its subcellular location is the cell inner membrane. Functionally, probable uptake of benzoate. The protein is Benzoate transport protein (benK) of Acinetobacter baylyi (strain ATCC 33305 / BD413 / ADP1).